The following is a 150-amino-acid chain: UPF0178 protein PBPRA1738 (150 aa).

It belongs to the UPF0178 family.

In Photobacterium profundum (strain SS9), this protein is UPF0178 protein PBPRA1738.